Reading from the N-terminus, the 384-residue chain is Protein NDRG1 (384 aa).

Residue serine 2 is modified to N-acetylserine. Serine 2, serine 319, and serine 326 each carry phosphoserine. The segment at 325 to 384 (RSRTASGSSVTSLEGARSRSHTSEGTRSRSHTSEGTRLDIIPNSGGPGSSAGPNSTEVSC) is disordered. Polar residues predominate over residues 327–336 (RTASGSSVTS). Phosphothreonine; by SGK1 is present on threonine 328. Phosphoserine; by SGK1 is present on residues serine 330 and serine 332. Residue serine 333 is modified to Phosphoserine. A Phosphothreonine modification is found at threonine 335. Serine 336 and serine 342 each carry phosphoserine. 2 repeat units span residues 339–348 (GARSRSHTSE) and 349–358 (GTRSRSHTSE). The segment at 339 to 358 (GARSRSHTSEGTRSRSHTSE) is 2 X 10 AA tandem repeats of G-[PST]-R-S-R-S-H-T-S-E. The segment covering 345 to 361 (HTSEGTRSRSHTSEGTR) has biased composition (basic and acidic residues). Residue threonine 346 is modified to Phosphothreonine; by SGK1. Phosphoserine is present on serine 352. A Phosphothreonine; by SGK1 modification is found at threonine 356. Positions 374–384 (SAGPNSTEVSC) are enriched in low complexity.

This sequence belongs to the NDRG family. In terms of assembly, interacts with RAB4A (membrane-bound form); the interaction involves NDRG1 in vesicular recycling of CDH1. Interacts with APOA1, APOA2, PRA1 and RTN1. In terms of processing, under stress conditions, phosphorylated in the C-terminal on many serine and threonine residues. Phosphorylated in vitro by PKA. Phosphorylation enhanced by increased intracellular cAMP levels. Homocysteine induces dephosphorylation. Phosphorylation by SGK1 is cell cycle dependent.

Its subcellular location is the cytoplasm. The protein resides in the cytosol. It localises to the cytoskeleton. The protein localises to the microtubule organizing center. It is found in the centrosome. Its subcellular location is the nucleus. The protein resides in the cell membrane. In terms of biological role, stress-responsive protein involved in hormone responses, cell growth, and differentiation. Acts as a tumor suppressor in many cell types. Necessary but not sufficient for p53/TP53-mediated caspase activation and apoptosis. Has a role in cell trafficking notably of the Schwann cell and is necessary for the maintenance and development of the peripheral nerve myelin sheath. Required for vesicular recycling of CDH1 and TF. May also function in lipid trafficking. Protects cells from spindle disruption damage. Functions in p53/TP53-dependent mitotic spindle checkpoint. Regulates microtubule dynamics and maintains euploidy. This is Protein NDRG1 (NDRG1) from Bos taurus (Bovine).